A 285-amino-acid polypeptide reads, in one-letter code: Bifunctional protein FolD (285 aa).

NADP(+) is bound by residues 165–167 and Ser-190; that span reads GRS.

It belongs to the tetrahydrofolate dehydrogenase/cyclohydrolase family. In terms of assembly, homodimer.

The catalysed reaction is (6R)-5,10-methylene-5,6,7,8-tetrahydrofolate + NADP(+) = (6R)-5,10-methenyltetrahydrofolate + NADPH. It catalyses the reaction (6R)-5,10-methenyltetrahydrofolate + H2O = (6R)-10-formyltetrahydrofolate + H(+). Its pathway is one-carbon metabolism; tetrahydrofolate interconversion. Its function is as follows. Catalyzes the oxidation of 5,10-methylenetetrahydrofolate to 5,10-methenyltetrahydrofolate and then the hydrolysis of 5,10-methenyltetrahydrofolate to 10-formyltetrahydrofolate. The polypeptide is Bifunctional protein FolD (Staphylococcus saprophyticus subsp. saprophyticus (strain ATCC 15305 / DSM 20229 / NCIMB 8711 / NCTC 7292 / S-41)).